Reading from the N-terminus, the 1194-residue chain is Immunoglobulin superfamily member 3 (1194 aa).

The first 19 residues, methionine 1–alanine 19, serve as a signal peptide directing secretion. Ig-like C2-type domains follow at residues glutamine 20 to asparagine 138, proline 143 to methionine 262, proline 276 to threonine 386, proline 401 to threonine 539, phenylalanine 545 to leucine 661, proline 676 to serine 803, proline 813 to threonine 945, and proline 949 to threonine 1097. Over glutamine 20–alanine 1124 the chain is Extracellular. Intrachain disulfides connect cysteine 42–cysteine 120 and cysteine 167–cysteine 246. Asparagine 43 carries N-linked (GlcNAc...) asparagine glycosylation. Positions glutamate 250 to isoleucine 252 match the EWI motif motif. Cysteine 302 and cysteine 376 form a disulfide bridge. Asparagine 418 is a glycosylation site (N-linked (GlcNAc...) asparagine). Intrachain disulfides connect cysteine 432–cysteine 511, cysteine 566–cysteine 645, cysteine 701–cysteine 782, cysteine 838–cysteine 918, and cysteine 974–cysteine 1080. N-linked (GlcNAc...) asparagine glycosylation is present at asparagine 842. Residues glycine 997–arginine 1030 form a disordered region. The span at aspartate 1007–aspartate 1026 shows a compositional bias: acidic residues. Asparagine 1077 carries an N-linked (GlcNAc...) asparagine glycan. Residues leucine 1125 to leucine 1145 form a helical membrane-spanning segment. At leucine 1146–aspartate 1194 the chain is on the cytoplasmic side.

Expressed in the lacrimal duct and lacrimal gland.

It is found in the membrane. The polypeptide is Immunoglobulin superfamily member 3 (Igsf3) (Mus musculus (Mouse)).